A 79-amino-acid chain; its full sequence is U1-plectoxin-Pt1c (79 aa).

The signal sequence occupies residues 1 to 18 (HLILASALICALVVCTFA). A propeptide spanning residues 19-31 (EEQVNVPFLPDER) is cleaved from the precursor. 5 disulfides stabilise this stretch: Cys35–Cys49, Cys42–Cys55, Cys48–Cys66, Cys52–Cys75, and Cys57–Cys64. Residues 78 to 79 (RR) constitute a propeptide that is removed on maturation.

Belongs to the neurotoxin 02 (plectoxin) family. 02 (plectoxin) subfamily. As to expression, expressed by the venom gland.

The protein resides in the secreted. Functionally, potent toxin that may paralyze and/or kill insect pests such as H.virescens (lepidoptera), S.exigua (beet armyworm) and M.sexta (tobacco hornworm). In Plectreurys tristis (Spider), this protein is U1-plectoxin-Pt1c.